A 233-amino-acid chain; its full sequence is Large ribosomal subunit protein uL1 (233 aa).

The protein belongs to the universal ribosomal protein uL1 family. As to quaternary structure, part of the 50S ribosomal subunit.

Functionally, binds directly to 23S rRNA. The L1 stalk is quite mobile in the ribosome, and is involved in E site tRNA release. Its function is as follows. Protein L1 is also a translational repressor protein, it controls the translation of the L11 operon by binding to its mRNA. In Hamiltonella defensa subsp. Acyrthosiphon pisum (strain 5AT), this protein is Large ribosomal subunit protein uL1.